Consider the following 488-residue polypeptide: GTPase Der (488 aa).

The EngA-type G 1 domain maps to 3 to 166; that stretch reads PVVALVGRPN…YALAPYAEAL (164 aa). GTP contacts are provided by residues 9–16, 56–60, and 118–121; these read GRPNVGKS, DTGGI, and NKVD. The disordered stretch occupies residues 168–191; that stretch reads LNRDGDEDEDEEEREYSEEEAEAE. Acidic residues predominate over residues 172–189; that stretch reads GDEDEDEEEREYSEEEAE. The region spanning 200 to 373 is the EngA-type G 2 domain; that stretch reads IKMAIIGKPN…SVQEAYDSAT (174 aa). GTP-binding positions include 206–213, 253–257, and 318–321; these read GKPNVGKS, DTAGV, and NKWD. Residues 374–458 enclose the KH-like domain; it reads RRVSTSMLTR…PIQIRFQDSA (85 aa).

Belongs to the TRAFAC class TrmE-Era-EngA-EngB-Septin-like GTPase superfamily. EngA (Der) GTPase family. Associates with the 50S ribosomal subunit.

In terms of biological role, GTPase that plays an essential role in the late steps of ribosome biogenesis. This chain is GTPase Der, found in Shewanella sediminis (strain HAW-EB3).